We begin with the raw amino-acid sequence, 320 residues long: Acetyl-coenzyme A carboxylase carboxyl transferase subunit alpha (320 aa).

The region spanning 42–295 (IGDKAAQALK…GDAIAEAFND (254 aa)) is the CoA carboxyltransferase C-terminal domain.

It belongs to the AccA family. In terms of assembly, acetyl-CoA carboxylase is a heterohexamer composed of biotin carboxyl carrier protein (AccB), biotin carboxylase (AccC) and two subunits each of ACCase subunit alpha (AccA) and ACCase subunit beta (AccD).

It localises to the cytoplasm. The catalysed reaction is N(6)-carboxybiotinyl-L-lysyl-[protein] + acetyl-CoA = N(6)-biotinyl-L-lysyl-[protein] + malonyl-CoA. The protein operates within lipid metabolism; malonyl-CoA biosynthesis; malonyl-CoA from acetyl-CoA: step 1/1. Component of the acetyl coenzyme A carboxylase (ACC) complex. First, biotin carboxylase catalyzes the carboxylation of biotin on its carrier protein (BCCP) and then the CO(2) group is transferred by the carboxyltransferase to acetyl-CoA to form malonyl-CoA. This is Acetyl-coenzyme A carboxylase carboxyl transferase subunit alpha from Nitrobacter hamburgensis (strain DSM 10229 / NCIMB 13809 / X14).